Consider the following 221-residue polypeptide: Urease accessory protein UreF (221 aa).

Belongs to the UreF family. As to quaternary structure, ureD, UreF and UreG form a complex that acts as a GTP-hydrolysis-dependent molecular chaperone, activating the urease apoprotein by helping to assemble the nickel containing metallocenter of UreC. The UreE protein probably delivers the nickel.

The protein resides in the cytoplasm. In terms of biological role, required for maturation of urease via the functional incorporation of the urease nickel metallocenter. The sequence is that of Urease accessory protein UreF from Teredinibacter turnerae (strain ATCC 39867 / T7901).